The primary structure comprises 437 residues: Phosphomethylpyrimidine synthase (437 aa).

Substrate is bound by residues Asn69, Met98, Tyr127, His163, Ser185–Gly187, Asp226–Arg229, and Glu265. His269 lines the Zn(2+) pocket. Tyr292 is a substrate binding site. Residue His333 participates in Zn(2+) binding. Cys409, Cys412, and Cys416 together coordinate [4Fe-4S] cluster.

It belongs to the ThiC family. [4Fe-4S] cluster serves as cofactor.

It catalyses the reaction 5-amino-1-(5-phospho-beta-D-ribosyl)imidazole + S-adenosyl-L-methionine = 4-amino-2-methyl-5-(phosphooxymethyl)pyrimidine + CO + 5'-deoxyadenosine + formate + L-methionine + 3 H(+). It functions in the pathway cofactor biosynthesis; thiamine diphosphate biosynthesis. Functionally, catalyzes the synthesis of the hydroxymethylpyrimidine phosphate (HMP-P) moiety of thiamine from aminoimidazole ribotide (AIR) in a radical S-adenosyl-L-methionine (SAM)-dependent reaction. The protein is Phosphomethylpyrimidine synthase of Alkaliphilus metalliredigens (strain QYMF).